Here is a 407-residue protein sequence, read N- to C-terminus: MAPAGGKNVKKGILERLNSGEVIIGDGGFVFALEKRGYVKAGPWTPEAAVEHPEAVRQLHREFLRAGSNVMQTFTFYASEDKLENRGNYVAEKISGQKVNEAACDIARQVADEGDALVAGGVSQTPSYLSCKSETEVKKVFQQQLEVFVKKNVDFLIAEYFEHVEEAVWAVEALKASGKPVAATMCIGPEGDLHSVTPGECAVRLVKAGASIVGVNCHFDPTISLQTVKLMKEGLEAAGLKAHLMSQPLAYHTPDCGKQGFIDLPEFPFGLEPRVATRWDIQKYAREAYNLGVRYIGGCCGFEPYHIRAIAEELAPERGFLPLASEKHGSWGSGLDMHTKPWIRARARKEYWENLQIASGRPYNPSMSKPDAWGVTKGTAELMQQKEATTEQQLRELFEKQKFKSAQ.

A Hcy-binding domain is found at 11 to 314 (KGILERLNSG…YHIRAIAEEL (304 aa)). Lys40, Lys93, and Lys98 each carry N6-succinyllysine. Cys217 serves as a coordination point for Zn(2+). N6-succinyllysine is present on residues Lys232 and Lys241. The Zn(2+) site is built by Cys299 and Cys300. Ser330 carries the post-translational modification Phosphoserine. 2 positions are modified to N6-succinyllysine: Lys340 and Lys377.

In terms of assembly, homotetramer. Requires Zn(2+) as cofactor.

It is found in the cytoplasm. The protein localises to the cytosol. The protein resides in the nucleus. It carries out the reaction L-homocysteine + glycine betaine = N,N-dimethylglycine + L-methionine. It functions in the pathway amine and polyamine degradation; betaine degradation; sarcosine from betaine: step 1/2. The protein operates within amino-acid biosynthesis; L-methionine biosynthesis via de novo pathway; L-methionine from L-homocysteine (BhmT route): step 1/1. Its function is as follows. Involved in the regulation of homocysteine metabolism. Converts betaine and homocysteine to dimethylglycine and methionine, respectively. This reaction is also required for the irreversible oxidation of choline. This Bos taurus (Bovine) protein is Betaine--homocysteine S-methyltransferase 1 (BHMT).